Consider the following 393-residue polypeptide: CAI-1 autoinducer synthase (393 aa).

At Lys240 the chain carries N6-(pyridoxal phosphate)lysine.

Belongs to the class-II pyridoxal-phosphate-dependent aminotransferase family. Pyridoxal 5'-phosphate serves as cofactor.

Required for the synthesis of the quorum-sensing autoinducer CAI-1 ((S)-3-hydroxytridecan-4-one) which probably functions as an intragenus signal. The protein is CAI-1 autoinducer synthase (cqsA) of Vibrio campbellii (strain ATCC BAA-1116).